Reading from the N-terminus, the 840-residue chain is Phosphatidylglycerol lysyltransferase (840 aa).

Residues 1-8 (MTQELKSK) are Cytoplasmic-facing. A helical membrane pass occupies residues 9 to 29 (LLSFFKFIFATALFIFVIFTL). Residues 30-52 (YRELSHINFKETFIQFGKINRLW) are Extracellular-facing. A helical membrane pass occupies residues 53–73 (LVLLFAGGGLSLILLSLYDII). The Cytoplasmic segment spans residues 74-89 (LVKALKLKMPLIRVFR). Residues 90–110 (VSYIINALNSIIGFGGFIGAG) form a helical membrane-spanning segment. Topologically, residues 111 to 129 (VRAFVYKNYTNDTKKLVQY) are extracellular. Residues 130–150 (ISIILVSMLTGLSLLSILVVL) traverse the membrane as a helical segment. The Cytoplasmic segment spans residues 151 to 161 (RIFNASHMIDE). The helical transmembrane segment at 162 to 182 (ISWVRWILYIVALFLPIFIFY) threads the bilayer. The Extracellular portion of the chain corresponds to 183–200 (TVARPVDRNNRYMGVYCT). The chain crosses the membrane as a helical span at residues 201–221 (VVSCVEWMAAATVLYFAALIV). The Cytoplasmic portion of the chain corresponds to 222-229 (DIHISFMT). The chain crosses the membrane as a helical span at residues 230–250 (FVGIFVIAALSGLVSFIPGGF). The Extracellular portion of the chain corresponds to 251–270 (GAFDLVVLLGLKSLGISEEK). Residues 271–291 (ILLALVLYRFAYYFVPVMIAL) form a helical membrane-spanning segment. Over 292 to 337 (ILSSFEFGNTAKKYLDNSKYFIPVKDFTSFLRSYQKDILAKVPSFS) the chain is Cytoplasmic. The chain crosses the membrane as a helical span at residues 338-358 (LAILIFLTSIIFFINNLTIVY). Residues 359–366 (DGLYDGNH) lie on the Extracellular side of the membrane. A helical membrane pass occupies residues 367–387 (FAYYIALAIQTSACLLLILNV). Over 388 to 392 (RGIYK) the chain is Cytoplasmic. A helical membrane pass occupies residues 393 to 413 (GSRRAIIYAFISIILIASATI). Over 414-415 (YT) the chain is Extracellular. Residues 416–436 (YASFLLLSWLIIIFVLLILAY) form a helical membrane-spanning segment. Topologically, residues 437-450 (QRAQVLKRPLRFKK) are cytoplasmic. A helical transmembrane segment spans residues 451–471 (LAFMLLLSIFILYLNHILISG). The Extracellular portion of the chain corresponds to 472–489 (TLYALDVYHIEIDTSLLR). The chain crosses the membrane as a helical span at residues 490-510 (YYFWMTIVIIMLLVGVIAWLF). The Cytoplasmic segment spans residues 511-840 (DYKYKRPHHS…LKVMRVIRHK (330 aa)).

The protein belongs to the LPG synthase family.

It is found in the cell membrane. The enzyme catalyses L-lysyl-tRNA(Lys) + a 1,2-diacyl-sn-glycero-3-phospho-(1'-sn-glycerol) = a 1,2-diacyl-sn-glycero-3-phospho-1'-(3'-O-L-lysyl)-sn-glycerol + tRNA(Lys). Its function is as follows. Catalyzes the transfer of a lysyl group from L-lysyl-tRNA(Lys) to membrane-bound phosphatidylglycerol (PG), which produces lysylphosphatidylglycerol (LPG), a major component of the bacterial membrane with a positive net charge. LPG synthesis contributes to bacterial virulence as it is involved in the resistance mechanism against cationic antimicrobial peptides (CAMP) produces by the host's immune system (defensins, cathelicidins) and by the competing microorganisms (bacteriocins). In fact, the modification of anionic phosphatidylglycerol with positively charged L-lysine results in repulsion of the peptides. The chain is Phosphatidylglycerol lysyltransferase (mprF) from Staphylococcus epidermidis (strain ATCC 35984 / DSM 28319 / BCRC 17069 / CCUG 31568 / BM 3577 / RP62A).